A 527-amino-acid polypeptide reads, in one-letter code: Peptide chain release factor 3 (527 aa).

Residues 9-277 form the tr-type G domain; it reads AKRRTFAIIS…AVVDWAPRPL (269 aa). GTP contacts are provided by residues 18–25, 86–90, and 140–143; these read SHPDAGKT, DTPGH, and NKLD.

This sequence belongs to the TRAFAC class translation factor GTPase superfamily. Classic translation factor GTPase family. PrfC subfamily.

The protein localises to the cytoplasm. In terms of biological role, increases the formation of ribosomal termination complexes and stimulates activities of RF-1 and RF-2. It binds guanine nucleotides and has strong preference for UGA stop codons. It may interact directly with the ribosome. The stimulation of RF-1 and RF-2 is significantly reduced by GTP and GDP, but not by GMP. This is Peptide chain release factor 3 from Ectopseudomonas mendocina (strain ymp) (Pseudomonas mendocina).